The primary structure comprises 120 residues: NAD(P)H-quinone oxidoreductase subunit 3 (120 aa).

3 helical membrane-spanning segments follow: residues 7-27 (YEYV…ALTA), 64-84 (MFAL…PWAV), and 89-109 (LGLL…VALV).

The protein belongs to the complex I subunit 3 family. In terms of assembly, NDH-1 can be composed of about 15 different subunits; different subcomplexes with different compositions have been identified which probably have different functions.

It localises to the cellular thylakoid membrane. The enzyme catalyses a plastoquinone + NADH + (n+1) H(+)(in) = a plastoquinol + NAD(+) + n H(+)(out). It catalyses the reaction a plastoquinone + NADPH + (n+1) H(+)(in) = a plastoquinol + NADP(+) + n H(+)(out). Its function is as follows. NDH-1 shuttles electrons from an unknown electron donor, via FMN and iron-sulfur (Fe-S) centers, to quinones in the respiratory and/or the photosynthetic chain. The immediate electron acceptor for the enzyme in this species is believed to be plastoquinone. Couples the redox reaction to proton translocation, and thus conserves the redox energy in a proton gradient. Cyanobacterial NDH-1 also plays a role in inorganic carbon-concentration. This is NAD(P)H-quinone oxidoreductase subunit 3 from Crocosphaera subtropica (strain ATCC 51142 / BH68) (Cyanothece sp. (strain ATCC 51142)).